The following is a 545-amino-acid chain: ATP synthase F(1) complex subunit alpha, mitochondrial (545 aa).

Positions 216, 218, 219, 220, and 221 each coordinate ATP. Threonine 220 is a binding site for Mg(2+). Aspartate 304 lines the Mg(2+) pocket. Positions 465 and 467 each coordinate ATP.

Belongs to the ATPase alpha/beta chains family. In terms of assembly, homotrimer. Component of the ATP synthase complex composed at least of ATP5F1A/subunit alpha, ATP5F1B/subunit beta, ATP5MC1/subunit c (homooctomer), MT-ATP6/subunit a, MT-ATP8/subunit 8, ATP5ME/subunit e, ATP5MF/subunit f, ATP5MG/subunit g, ATP5MK/subunit k, ATP5MJ/subunit j, ATP5F1C/subunit gamma, ATP5F1D/subunit delta, ATP5F1E/subunit epsilon, ATP5PF/subunit F6, ATP5PB/subunit b, ATP5PD/subunit d, ATP5PO/subunit OSCP. ATP synthase complex consists of a soluble F(1) head domain (subunits alpha(3) and beta(3)) - the catalytic core - and a membrane F(0) domain - the membrane proton channel (subunits c, a, 8, e, f, g, k and j). These two domains are linked by a central stalk (subunits gamma, delta, and epsilon) rotating inside the F1 region and a stationary peripheral stalk (subunits F6, b, d, and OSCP).

It is found in the mitochondrion inner membrane. In terms of biological role, subunit alpha, of the mitochondrial membrane ATP synthase complex (F(1)F(0) ATP synthase or Complex V) that produces ATP from ADP in the presence of a proton gradient across the membrane which is generated by electron transport complexes of the respiratory chain. ATP synthase complex consist of a soluble F(1) head domain - the catalytic core - and a membrane F(1) domain - the membrane proton channel. These two domains are linked by a central stalk rotating inside the F(1) region and a stationary peripheral stalk. During catalysis, ATP synthesis in the catalytic domain of F(1) is coupled via a rotary mechanism of the central stalk subunits to proton translocation. In vivo, can only synthesize ATP although its ATP hydrolase activity can be activated artificially in vitro. With the catalytic subunit beta (ATP5F1B), forms the catalytic core in the F(1) domain. Subunit alpha does not bear the catalytic high-affinity ATP-binding sites. The polypeptide is ATP synthase F(1) complex subunit alpha, mitochondrial (Xenopus laevis (African clawed frog)).